The following is a 71-amino-acid chain: uncharacterized protein (71 aa).

At 1 to 16 the chain is on the cytoplasmic side; it reads MLLLYTVMILTCIIYK. Residues 17 to 38 form a helical membrane-spanning segment; the sequence is LVPDNKYWPIHMFFFIMIYIVY. Residues 39 to 69 lie on the Extracellular side of the membrane; it reads MYEKLDIHEKSQFWNYTMARLSGHPVPTIIC. N-linked (GlcNAc...) asparagine; by host glycosylation is present at Asn53.

Belongs to the asfivirus X69R family.

Its subcellular location is the host membrane. This is an uncharacterized protein from African swine fever virus (isolate Pig/Kenya/KEN-50/1950) (ASFV).